Reading from the N-terminus, the 435-residue chain is Acetylcholine receptor-like protein cup-4 (435 aa).

Residues 1–24 form the signal peptide; it reads MRLLLIFTVIFVFYLAILKRDVNA. 4 N-linked (GlcNAc...) asparagine glycosylation sites follow: asparagine 41, asparagine 68, asparagine 237, and asparagine 249. 2 consecutive transmembrane segments (helical) span residues 298 to 318 and 341 to 361; these read VSFF…AIYL and ITLF…HGVL. Asparagine 403 carries an N-linked (GlcNAc...) asparagine glycan. The helical transmembrane segment at 413-433 threads the bilayer; it reads PLAGLAMFVYFVIMFILYLVV.

The protein belongs to the ligand-gated ion channel (TC 1.A.9) family. Acetylcholine receptor (TC 1.A.9.1) subfamily.

The protein localises to the cytoplasmic vesicle membrane. Thought to regulate endocytosis in coelomocytes through modulation of phospholipase C activity. Possible acetylcholine receptor. This chain is Acetylcholine receptor-like protein cup-4, found in Caenorhabditis briggsae.